The following is a 280-amino-acid chain: Protein HEAT-INDUCED TAS1 TARGET 4 (280 aa).

Belongs to the heat induced plant HTT protein family. As to expression, expressed in seedlings, leaves, stems, inflorescences and siliques.

Its subcellular location is the cytoplasm. It is found in the nucleus. In terms of biological role, mediates both basal and acquired thermotolerance. This chain is Protein HEAT-INDUCED TAS1 TARGET 4, found in Arabidopsis thaliana (Mouse-ear cress).